A 563-amino-acid chain; its full sequence is Cysteine--tRNA ligase, chloroplastic/mitochondrial (563 aa).

C91 serves as a coordination point for Zn(2+). G92 provides a ligand contact to L-cysteine. Residues 93 to 103 (VTAYDLSHIGH) carry the 'HIGH' region motif. Position 131 (T131) interacts with L-cysteine. A 'KIIK' region motif is present at residues 136–139 (KIIA). Positions 271, 296, and 300 each coordinate Zn(2+). H296 lines the L-cysteine pocket. Residues 328–332 (KMSKS) carry the 'KMSKS' region motif. K331 serves as a coordination point for ATP.

Belongs to the class-I aminoacyl-tRNA synthetase family. Requires Zn(2+) as cofactor.

The protein resides in the plastid. Its subcellular location is the chloroplast. It localises to the mitochondrion. It catalyses the reaction tRNA(Cys) + L-cysteine + ATP = L-cysteinyl-tRNA(Cys) + AMP + diphosphate. Required for female gametophyte development. Is necessary for the fusion of central cell nuclei and programmed cell death (PCD) of the antipodals. This Arabidopsis thaliana (Mouse-ear cress) protein is Cysteine--tRNA ligase, chloroplastic/mitochondrial.